The primary structure comprises 364 residues: Dual-specificity RNA methyltransferase RlmN (364 aa).

Glutamate 93 acts as the Proton acceptor in catalysis. A Radical SAM core domain is found at 99–337 (EDDRGTLCIS…ATIRKTRGDD (239 aa)). A disulfide bridge connects residues cysteine 106 and cysteine 342. Positions 113, 117, and 120 each coordinate [4Fe-4S] cluster. S-adenosyl-L-methionine is bound by residues 167-168 (GE), serine 199, 221-223 (SLH), and asparagine 299. Cysteine 342 functions as the S-methylcysteine intermediate in the catalytic mechanism.

The protein belongs to the radical SAM superfamily. RlmN family. It depends on [4Fe-4S] cluster as a cofactor.

The protein localises to the cytoplasm. The catalysed reaction is adenosine(2503) in 23S rRNA + 2 reduced [2Fe-2S]-[ferredoxin] + 2 S-adenosyl-L-methionine = 2-methyladenosine(2503) in 23S rRNA + 5'-deoxyadenosine + L-methionine + 2 oxidized [2Fe-2S]-[ferredoxin] + S-adenosyl-L-homocysteine. The enzyme catalyses adenosine(37) in tRNA + 2 reduced [2Fe-2S]-[ferredoxin] + 2 S-adenosyl-L-methionine = 2-methyladenosine(37) in tRNA + 5'-deoxyadenosine + L-methionine + 2 oxidized [2Fe-2S]-[ferredoxin] + S-adenosyl-L-homocysteine. Specifically methylates position 2 of adenine 2503 in 23S rRNA and position 2 of adenine 37 in tRNAs. m2A2503 modification seems to play a crucial role in the proofreading step occurring at the peptidyl transferase center and thus would serve to optimize ribosomal fidelity. This chain is Dual-specificity RNA methyltransferase RlmN, found in Dichelobacter nodosus (strain VCS1703A).